The chain runs to 895 residues: Androgen receptor (895 aa).

The segment at 1-533 (MEVQLGLGRV…PIDYYFPPQK (533 aa)) is modulating. The segment at 1-562 (MEVQLGLGRV…GSCKVFFKRA (562 aa)) is interaction with ZNF318. Disordered stretches follow at residues 33-155 (VIQN…PTFP) and 175-211 (QLLQQQQQEAVSEGSSSGRAREASGAPTSSKDNYLGG). Low complexity-rich tracts occupy residues 44-81 (AASAAPPGASLQQQQQQQQQETSPRQQQQQQGEDGSPQ) and 175-200 (QLLQQQQQEAVSEGSSSGRAREASGA). Ser66 carries the post-translational modification Phosphoserine; by CDK9. Ser79 bears the Phosphoserine mark. The span at 201-211 (PTSSKDNYLGG) shows a compositional bias: polar residues. Tyr208 is subject to Phosphotyrosine; by CSK. Ser241 bears the Phosphoserine mark. Tyr252 carries the post-translational modification Phosphotyrosine; by CSK and TNK2. Residues Tyr292, Tyr331, Tyr342, and Tyr347 each carry the phosphotyrosine; by CSK modification. At Tyr348 the chain carries Phosphotyrosine; by CSK and TNK2. Residue Lys371 forms a Glycyl lysine isopeptide (Lys-Gly) (interchain with G-Cter in SUMO) linkage. Tyr378 carries the phosphotyrosine; by CSK modification. Lys496 participates in a covalent cross-link: Glycyl lysine isopeptide (Lys-Gly) (interchain with G-Cter in SUMO). Residues Tyr510 and Tyr527 each carry the phosphotyrosine; by CSK modification. The tract at residues 527–894 (YYFPPQKTCL…GKVKPIYFHT (368 aa)) is interaction with LPXN. The segment at residues 534 to 607 (TCLICGDEAS…AGMTLGARKL (74 aa)) is a DNA-binding region (nuclear receptor). 2 NR C4-type zinc fingers span residues 535-555 (CLICGDEASGCHYGALTCGSC) and 571-595 (CASRNDCTIDKFRRKNCPSCRLRKC). The interaction with HIPK3 stretch occupies residues 547-637 (YGALTCGSCK…TEETAQKLTV (91 aa)). Residues 567–894 (QKYLCASRND…GKVKPIYFHT (328 aa)) form an interaction with CCAR1 region. Residues 600 to 894 (MTLGARKLKK…GKVKPIYFHT (295 aa)) are interaction with KAT7. Ser626 carries the post-translational modification Phosphoserine; by STK4/MST1. One can recognise an NR LBD domain in the interval 644-875 (ECQPIFLNVL…DFPEMMAEII (232 aa)). 17beta-hydroxy-5alpha-androstan-3-one contacts are provided by Asn681 and Arg728. Glycyl lysine isopeptide (Lys-Gly) (interchain with G-Cter in ubiquitin) cross-links involve residues Lys821 and Lys823. A 17beta-hydroxy-5alpha-androstan-3-one-binding site is contributed by Thr853. Tyr891 carries the phosphotyrosine; by CSK modification.

Belongs to the nuclear hormone receptor family. NR3 subfamily. Binds DNA as a homodimer. Part of a ternary complex containing AR, EFCAB6/DJBP and PARK7. Interacts with HIPK3 and NR0B2 in the presence of androgen. The ligand binding domain interacts with KAT7/HBO1 in the presence of dihydrotestosterone. Interacts with EFCAB6/DJBP, PQBP1, RANBP9, RBAK, SPDEF, SRA1, TGFB1I1 and RREB1. Interacts with ZMIZ1/ZIMP10 and ZMIZ2/ZMIP7 which both enhance its transactivation activity. Interacts with SLC30A9 and RAD54L2/ARIP4. Interacts with MACROD1 (via macro domain). Interacts via the ligand-binding domain with LXXLL and FXXLF motifs from NCOA1, NCOA2, NCOA3 and MAGEA11. Interacts (via nuclear receptor DNA binding domain and nuclear receptor ligand binding domain) with NCOA4. The AR N-terminal poly-Gln region binds Ran resulting in enhancement of AR-mediated transactivation. Ran-binding decreases as the poly-Gln length increases. Interacts with HIP1 (via coiled coil domain). Interacts (via ligand-binding domain) with TRIM68. Interacts with TNK2. Interacts with USP26. Interacts with RNF6. Interacts (regulated by RNF6 probably through polyubiquitination) with RNF14; regulates AR transcriptional activity. Interacts with PRMT2 and TRIM24. Interacts with RACK1. Interacts with RANBP10; this interaction enhances dihydrotestosterone-induced AR transcriptional activity. Interacts with PRPF6 in a hormone-independent way; this interaction enhances dihydrotestosterone-induced AR transcriptional activity. Interacts with STK4/MST1. Interacts with ZIPK/DAPK3. Interacts with LPXN. Interacts with MAK. Part of a complex containing AR, MAK and NCOA3. Interacts with CRY1. Interacts with CCAR1 and GATA2. Interacts with ZNF318. Interacts with BUD31. Interacts with ARID4A. Interacts with ARID4B. Interacts (via NR LBD domain) with ZBTB7A; the interaction is direct and androgen-dependent. Interacts with NCOR1. Interacts with NCOR2. Interacts with CRY2 in a ligand-dependent manner. Post-translationally, phosphorylated in prostate cancer cells in response to several growth factors including EGF. Phosphorylation is induced by c-Src kinase (CSK). Tyr-510 is one of the major phosphorylation sites and an increase in phosphorylation and Src kinase activity is associated with prostate cancer progression. Phosphorylation by TNK2 enhances the DNA-binding and transcriptional activity. Phosphorylation at Ser-66 by CDK9 regulates AR promoter selectivity and cell growth. In terms of processing, sumoylated on Lys-371 (major) and Lys-496. Ubiquitinated. Deubiquitinated by USP26. 'Lys-6' and 'Lys-27'-linked polyubiquitination by RNF6 modulates AR transcriptional activity and specificity. Palmitoylated by ZDHHC7 and ZDHHC21. Palmitoylation is required for plasma membrane targeting and for rapid intracellular signaling via ERK and AKT kinases and cAMP generation.

It is found in the nucleus. The protein localises to the cytoplasm. Steroid hormone receptors are ligand-activated transcription factors that regulate eukaryotic gene expression and affect cellular proliferation and differentiation in target tissues. Transcription factor activity is modulated by bound coactivator and corepressor proteins like ZBTB7A that recruits NCOR1 and NCOR2 to the androgen response elements/ARE on target genes, negatively regulating androgen receptor signaling and androgen-induced cell proliferation. Transcription activation is also down-regulated by NR0B2. Activated, but not phosphorylated, by HIPK3 and ZIPK/DAPK3. This Papio hamadryas (Hamadryas baboon) protein is Androgen receptor (AR).